Reading from the N-terminus, the 231-residue chain is 5'-methylthioadenosine/S-adenosylhomocysteine nucleosidase (231 aa).

Glu-12 functions as the Proton acceptor in the catalytic mechanism. Residues Gly-78, Met-153, and 174–175 (ME) each bind substrate. Asp-198 functions as the Proton donor in the catalytic mechanism.

Belongs to the PNP/UDP phosphorylase family. MtnN subfamily.

It carries out the reaction S-adenosyl-L-homocysteine + H2O = S-(5-deoxy-D-ribos-5-yl)-L-homocysteine + adenine. It catalyses the reaction S-methyl-5'-thioadenosine + H2O = 5-(methylsulfanyl)-D-ribose + adenine. The enzyme catalyses 5'-deoxyadenosine + H2O = 5-deoxy-D-ribose + adenine. The protein operates within amino-acid biosynthesis; L-methionine biosynthesis via salvage pathway; S-methyl-5-thio-alpha-D-ribose 1-phosphate from S-methyl-5'-thioadenosine (hydrolase route): step 1/2. Catalyzes the irreversible cleavage of the glycosidic bond in both 5'-methylthioadenosine (MTA) and S-adenosylhomocysteine (SAH/AdoHcy) to adenine and the corresponding thioribose, 5'-methylthioribose and S-ribosylhomocysteine, respectively. Also cleaves 5'-deoxyadenosine, a toxic by-product of radical S-adenosylmethionine (SAM) enzymes, into 5-deoxyribose and adenine. This is 5'-methylthioadenosine/S-adenosylhomocysteine nucleosidase from Bacillus subtilis (strain 168).